Reading from the N-terminus, the 117-residue chain is Hemerythrin subunit beta (117 aa).

Residues histidine 24, histidine 53, glutamate 57, histidine 72, histidine 76, histidine 105, and aspartate 110 each coordinate Fe cation.

Belongs to the hemerythrin family. As to quaternary structure, octamer composed of two types of chains: alpha and beta.

Hemerythrin is a respiratory protein in blood cells of certain marine worms. The oxygen-binding site in each chain contains two iron atoms. The polypeptide is Hemerythrin subunit beta (Lingula reevii (Inarticulated brachiopod)).